A 352-amino-acid polypeptide reads, in one-letter code: tRNA uridine(34) hydroxylase (352 aa).

One can recognise a Rhodanese domain in the interval D146–L240. The active-site Cysteine persulfide intermediate is C200. Over residues E315–G328 the composition is skewed to basic and acidic residues. The segment at E315–E352 is disordered. The span at G342–E352 shows a compositional bias: polar residues.

This sequence belongs to the TrhO family.

The enzyme catalyses uridine(34) in tRNA + AH2 + O2 = 5-hydroxyuridine(34) in tRNA + A + H2O. Its function is as follows. Catalyzes oxygen-dependent 5-hydroxyuridine (ho5U) modification at position 34 in tRNAs. This is tRNA uridine(34) hydroxylase from Photorhabdus laumondii subsp. laumondii (strain DSM 15139 / CIP 105565 / TT01) (Photorhabdus luminescens subsp. laumondii).